We begin with the raw amino-acid sequence, 349 residues long: Thiamine-phosphate synthase (349 aa).

The segment at 1-125 (MGCESSLDPR…SAEAAAIRYG (125 aa)) is unknown. The segment at 63–85 (RARSTVTDPGAGMEHPAQLDRHS) is disordered. Residues 126–349 (LYDLEVTCLT…LLSSLSRPTL (224 aa)) are thiamine-phosphate synthase. 4-amino-2-methyl-5-(diphosphooxymethyl)pyrimidine-binding positions include 177 to 181 (QHRCK) and N209. Mg(2+) contacts are provided by D210 and D229. Positions 248 and 277 each coordinate 4-amino-2-methyl-5-(diphosphooxymethyl)pyrimidine. G304 serves as a coordination point for 2-[(2R,5Z)-2-carboxy-4-methylthiazol-5(2H)-ylidene]ethyl phosphate.

Belongs to the thiamine-phosphate synthase family. Mg(2+) is required as a cofactor.

It catalyses the reaction 2-[(2R,5Z)-2-carboxy-4-methylthiazol-5(2H)-ylidene]ethyl phosphate + 4-amino-2-methyl-5-(diphosphooxymethyl)pyrimidine + 2 H(+) = thiamine phosphate + CO2 + diphosphate. The enzyme catalyses 2-(2-carboxy-4-methylthiazol-5-yl)ethyl phosphate + 4-amino-2-methyl-5-(diphosphooxymethyl)pyrimidine + 2 H(+) = thiamine phosphate + CO2 + diphosphate. It carries out the reaction 4-methyl-5-(2-phosphooxyethyl)-thiazole + 4-amino-2-methyl-5-(diphosphooxymethyl)pyrimidine + H(+) = thiamine phosphate + diphosphate. It participates in cofactor biosynthesis; thiamine diphosphate biosynthesis; thiamine phosphate from 4-amino-2-methyl-5-diphosphomethylpyrimidine and 4-methyl-5-(2-phosphoethyl)-thiazole: step 1/1. Functionally, condenses 4-methyl-5-(beta-hydroxyethyl)thiazole monophosphate (THZ-P) and 2-methyl-4-amino-5-hydroxymethyl pyrimidine pyrophosphate (HMP-PP) to form thiamine monophosphate (TMP). This chain is Thiamine-phosphate synthase, found in Parasynechococcus marenigrum (strain WH8102).